Reading from the N-terminus, the 142-residue chain is Large ribosomal subunit protein bL17 (142 aa).

Belongs to the bacterial ribosomal protein bL17 family. In terms of assembly, part of the 50S ribosomal subunit. Contacts protein L32.

The chain is Large ribosomal subunit protein bL17 from Rickettsia bellii (strain OSU 85-389).